Here is a 1110-residue protein sequence, read N- to C-terminus: Coiled-coil domain-containing protein 150 (1110 aa).

Coiled-coil stretches lie at residues 122–250, 288–313, 413–695, and 728–1048; these read LENL…TSAS, QDLLAQEQRKNEDLGMTISQLKSDLN, AAHA…KEDN, and SEIA…EAHR.

The chain is Coiled-coil domain-containing protein 150 (Ccdc150) from Mus musculus (Mouse).